Reading from the N-terminus, the 62-residue chain is Small, acid-soluble spore protein H 1 (62 aa).

This sequence belongs to the SspH family.

Its subcellular location is the spore core. This Clostridium botulinum (strain ATCC 19397 / Type A) protein is Small, acid-soluble spore protein H 1.